A 298-amino-acid chain; its full sequence is MPDYEFSPASGDRPRSWISKQVLIVLGVCLPVILALAIWVGVLTWRQSSMGATDHVSAIVLGRCLTYTRNMHPELRNQDCKKILNTFTSAFVSKDPCNITKEDYQPLIDLVTQTVPCNKTLFWSRSKELAHQYSGIQKEMFTLEDTLLGYIADNLVWCGDPRTSEVKEEFCPYRNENCSSTATSVFWTVVSQKFAESACGTVYVMLNGSRTTAFSKASTFGSVEVFNLHPDRVHTLHAWVMHDIGGVERDSCLGSSIKELKSIVNQRNISFFCQDDYRPARFVQCVRHPEHPSCSVLM.

Residues 1-21 (MPDYEFSPASGDRPRSWISKQ) are Cytoplasmic-facing. Residues 22–42 (VLIVLGVCLPVILALAIWVGV) form a helical; Signal-anchor for type II membrane protein membrane-spanning segment. Residues 43–298 (LTWRQSSMGA…PEHPSCSVLM (256 aa)) lie on the Extracellular side of the membrane. Intrachain disulfides connect Cys64/Cys80, Cys97/Cys178, and Cys158/Cys171. Asn98 is a glycosylation site (N-linked (GlcNAc...) asparagine). Cys117 is a catalytic residue. A glycan (N-linked (GlcNAc...) asparagine) is linked at Asn118. Asn177 is a glycosylation site (N-linked (GlcNAc...) asparagine). Residue Cys199 is part of the active site. Residues Asn207 and Asn268 are each glycosylated (N-linked (GlcNAc...) asparagine). 2 disulfides stabilise this stretch: Cys252–Cys273 and Cys285–Cys294.

Belongs to the ADP-ribosyl cyclase family. In terms of assembly, homodimer. Osteoclasts.

It localises to the cell membrane. Its subcellular location is the microsome membrane. The protein resides in the endoplasmic reticulum membrane. It catalyses the reaction NAD(+) = cyclic ADP-beta-D-ribose + nicotinamide + H(+). The enzyme catalyses 2'-phospho-cyclic ADP-ribose + nicotinate = nicotinate-adenine dinucleotide phosphate. It carries out the reaction NAD(+) + H2O = ADP-D-ribose + nicotinamide + H(+). The catalysed reaction is nicotinate + NADP(+) = nicotinate-adenine dinucleotide phosphate + nicotinamide. Its function is as follows. Synthesizes cyclic ADP-ribose (cADPR), a second messenger for glucose-induced insulin secretion. Synthesizes the Ca(2+) mobilizer nicotinate-adenine dinucleotide phosphate, NAADP(+), from 2'-phospho-cADPR and nicotinic acid, as well as from NADP(+) and nicotinic acid. Also has cADPR hydrolase activity. This chain is ADP-ribosyl cyclase/cyclic ADP-ribose hydrolase 1 (CD38), found in Oryctolagus cuniculus (Rabbit).